A 176-amino-acid polypeptide reads, in one-letter code: Translation initiation factor IF-3 (176 aa).

Belongs to the IF-3 family. Monomer.

The protein resides in the cytoplasm. IF-3 binds to the 30S ribosomal subunit and shifts the equilibrium between 70S ribosomes and their 50S and 30S subunits in favor of the free subunits, thus enhancing the availability of 30S subunits on which protein synthesis initiation begins. This is Translation initiation factor IF-3 from Streptococcus mutans serotype c (strain ATCC 700610 / UA159).